The following is a 471-amino-acid chain: 8-amino-7-oxononanoate synthase (471 aa).

Arg-40 is a substrate binding site. 131–132 provides a ligand contact to pyridoxal 5'-phosphate; sequence GY. Position 156 (His-156) interacts with substrate. Pyridoxal 5'-phosphate-binding residues include Ser-202, His-230, and Thr-258. Lys-261 carries the N6-(pyridoxal phosphate)lysine modification. Thr-377 contributes to the substrate binding site. The tract at residues 409-471 is disordered; it reads SEGQTRREAE…LGAARRETAA (63 aa).

It belongs to the class-II pyridoxal-phosphate-dependent aminotransferase family. BioF subfamily. Homodimer. Pyridoxal 5'-phosphate serves as cofactor.

The catalysed reaction is 6-carboxyhexanoyl-[ACP] + L-alanine + H(+) = (8S)-8-amino-7-oxononanoate + holo-[ACP] + CO2. It functions in the pathway cofactor biosynthesis; biotin biosynthesis. Catalyzes the decarboxylative condensation of pimeloyl-[acyl-carrier protein] and L-alanine to produce 8-amino-7-oxononanoate (AON), [acyl-carrier protein], and carbon dioxide. This Burkholderia ambifaria (strain ATCC BAA-244 / DSM 16087 / CCUG 44356 / LMG 19182 / AMMD) (Burkholderia cepacia (strain AMMD)) protein is 8-amino-7-oxononanoate synthase.